The primary structure comprises 153 residues: Transcriptional repressor NrdR (153 aa).

The segment at 3-34 is a zinc-finger region; sequence CPFCGHLEDRVIDSRAGGAGEVIRRRRECASC. Residues 49-139 form the ATP-cone domain; sequence PTVVKKDGRR…VYRSFRDIDQ (91 aa).

It belongs to the NrdR family. Requires Zn(2+) as cofactor.

Its function is as follows. Negatively regulates transcription of bacterial ribonucleotide reductase nrd genes and operons by binding to NrdR-boxes. The polypeptide is Transcriptional repressor NrdR (Sorangium cellulosum (strain So ce56) (Polyangium cellulosum (strain So ce56))).